The primary structure comprises 21 residues: Natriuretic peptide TsNP (21 aa).

Cys-5 and Cys-21 are joined by a disulfide.

Expressed by the venom gland.

The protein resides in the secreted. In terms of biological role, scorpion venom natriuretic peptide that increases the perfusion pressure, glomerular filtration rate and urinary flow in the isolated perfused rat kidney assay. Induces a decrease of the percentages of renal transport for sodium, potassium and chloride and an increase of the urinary cGMP concentration. Also down-regulates the mRNA expression of natriuretic peptide receptor 1 (NPR1) in the kidneys whereas it up-regulates those of NPR2, NPR3 and guanylyl cyclase C (GUCY2C) mRNAs. May exhibit hypotensive and vasodepressor activities. This Tityus serrulatus (Brazilian scorpion) protein is Natriuretic peptide TsNP.